Consider the following 234-residue polypeptide: GTP-binding protein ypt4 (234 aa).

A GTP-binding site is contributed by 16-23 (GPSGTGKS). The Effector region motif lies at 39–47 (SHTVGIDFA). Residue 68–72 (DTAGQ) coordinates GTP. S-geranylgeranyl cysteine attachment occurs at residues Cys233 and Cys234.

Belongs to the small GTPase superfamily. Rab family.

It localises to the cell membrane. This chain is GTP-binding protein ypt4 (ypt4), found in Schizosaccharomyces pombe (strain 972 / ATCC 24843) (Fission yeast).